The sequence spans 344 residues: Arginine N-succinyltransferase (344 aa).

Leu-125 is a binding site for succinyl-CoA. His-229 functions as the Proton donor in the catalytic mechanism.

It belongs to the arginine N-succinyltransferase family.

It catalyses the reaction succinyl-CoA + L-arginine = N(2)-succinyl-L-arginine + CoA + H(+). Its pathway is amino-acid degradation; L-arginine degradation via AST pathway; L-glutamate and succinate from L-arginine: step 1/5. Its function is as follows. Catalyzes the transfer of succinyl-CoA to arginine to produce N(2)-succinylarginine. The sequence is that of Arginine N-succinyltransferase from Shigella boydii serotype 18 (strain CDC 3083-94 / BS512).